The following is an 881-amino-acid chain: DNA mismatch repair protein MutS (881 aa).

Residue 605-612 (GPNMSGKS) participates in ATP binding.

Belongs to the DNA mismatch repair MutS family.

Functionally, this protein is involved in the repair of mismatches in DNA. It is possible that it carries out the mismatch recognition step. This protein has a weak ATPase activity. The polypeptide is DNA mismatch repair protein MutS (Limosilactobacillus reuteri subsp. reuteri (strain JCM 1112) (Lactobacillus reuteri)).